The primary structure comprises 988 residues: Isoleucine--tRNA ligase (988 aa).

Positions Pro60–His70 match the 'HIGH' region motif. Position 570 (Glu570) interacts with L-isoleucyl-5'-AMP. The 'KMSKS' region signature appears at Lys611 to Ser615. Lys614 serves as a coordination point for ATP. Zn(2+)-binding residues include Cys957, Cys960, Cys977, and Cys980.

It belongs to the class-I aminoacyl-tRNA synthetase family. IleS type 1 subfamily. In terms of assembly, monomer. The cofactor is Zn(2+).

It localises to the cytoplasm. The enzyme catalyses tRNA(Ile) + L-isoleucine + ATP = L-isoleucyl-tRNA(Ile) + AMP + diphosphate. In terms of biological role, catalyzes the attachment of isoleucine to tRNA(Ile). As IleRS can inadvertently accommodate and process structurally similar amino acids such as valine, to avoid such errors it has two additional distinct tRNA(Ile)-dependent editing activities. One activity is designated as 'pretransfer' editing and involves the hydrolysis of activated Val-AMP. The other activity is designated 'posttransfer' editing and involves deacylation of mischarged Val-tRNA(Ile). The protein is Isoleucine--tRNA ligase of Synechocystis sp. (strain ATCC 27184 / PCC 6803 / Kazusa).